The following is a 310-amino-acid chain: Aspartate carbamoyltransferase catalytic subunit 3 (310 aa).

The carbamoyl phosphate site is built by Arg-55 and Thr-56. Lys-85 is an L-aspartate binding site. Residues Arg-106, His-134, and Gln-137 each contribute to the carbamoyl phosphate site. Residues Arg-167 and Arg-228 each coordinate L-aspartate. The carbamoyl phosphate site is built by Leu-266 and Pro-267.

Belongs to the aspartate/ornithine carbamoyltransferase superfamily. ATCase family. In terms of assembly, heterododecamer (2C3:3R2) of six catalytic PyrB chains organized as two trimers (C3), and six regulatory PyrI chains organized as three dimers (R2).

The enzyme catalyses carbamoyl phosphate + L-aspartate = N-carbamoyl-L-aspartate + phosphate + H(+). It participates in pyrimidine metabolism; UMP biosynthesis via de novo pathway; (S)-dihydroorotate from bicarbonate: step 2/3. Catalyzes the condensation of carbamoyl phosphate and aspartate to form carbamoyl aspartate and inorganic phosphate, the committed step in the de novo pyrimidine nucleotide biosynthesis pathway. This chain is Aspartate carbamoyltransferase catalytic subunit 3, found in Shewanella halifaxensis (strain HAW-EB4).